Reading from the N-terminus, the 104-residue chain is uncharacterized protein (104 aa).

Over residues 58–71 (PERDRARRDRDHHP) the composition is skewed to basic and acidic residues. The tract at residues 58–84 (PERDRARRDRDHHPWSRSRSQLSPRMA) is disordered.

This is an uncharacterized protein from Mycobacterium tuberculosis (strain ATCC 25618 / H37Rv).